Reading from the N-terminus, the 179-residue chain is Large ribosomal subunit protein uL6 (179 aa).

It belongs to the universal ribosomal protein uL6 family. In terms of assembly, part of the 50S ribosomal subunit.

In terms of biological role, this protein binds to the 23S rRNA, and is important in its secondary structure. It is located near the subunit interface in the base of the L7/L12 stalk, and near the tRNA binding site of the peptidyltransferase center. This is Large ribosomal subunit protein uL6 from Acaryochloris marina (strain MBIC 11017).